A 256-amino-acid chain; its full sequence is Hydroxyacylglutathione hydrolase (256 aa).

Residues H53, H55, D57, H58, H111, D128, and H166 each coordinate Zn(2+).

It belongs to the metallo-beta-lactamase superfamily. Glyoxalase II family. Monomer. Zn(2+) serves as cofactor.

It carries out the reaction an S-(2-hydroxyacyl)glutathione + H2O = a 2-hydroxy carboxylate + glutathione + H(+). Its pathway is secondary metabolite metabolism; methylglyoxal degradation; (R)-lactate from methylglyoxal: step 2/2. In terms of biological role, thiolesterase that catalyzes the hydrolysis of S-D-lactoyl-glutathione to form glutathione and D-lactic acid. The chain is Hydroxyacylglutathione hydrolase from Thiobacillus denitrificans (strain ATCC 25259 / T1).